A 404-amino-acid polypeptide reads, in one-letter code: Argininosuccinate synthase (404 aa).

ATP contacts are provided by residues 10-18 (AFSGGLDTS) and A37. L-citrulline contacts are provided by Y88 and S93. G118 provides a ligand contact to ATP. Residues T120, N124, and D125 each coordinate L-aspartate. Residue N124 participates in L-citrulline binding. R128, S179, S188, E264, and Y276 together coordinate L-citrulline.

This sequence belongs to the argininosuccinate synthase family. Type 1 subfamily. Homotetramer.

Its subcellular location is the cytoplasm. It carries out the reaction L-citrulline + L-aspartate + ATP = 2-(N(omega)-L-arginino)succinate + AMP + diphosphate + H(+). The protein operates within amino-acid biosynthesis; L-arginine biosynthesis; L-arginine from L-ornithine and carbamoyl phosphate: step 2/3. This is Argininosuccinate synthase from Nitrosomonas europaea (strain ATCC 19718 / CIP 103999 / KCTC 2705 / NBRC 14298).